The chain runs to 129 residues: Small ribosomal subunit protein uS11 (129 aa).

It belongs to the universal ribosomal protein uS11 family. In terms of assembly, part of the 30S ribosomal subunit. Interacts with proteins S7 and S18. Binds to IF-3.

Located on the platform of the 30S subunit, it bridges several disparate RNA helices of the 16S rRNA. Forms part of the Shine-Dalgarno cleft in the 70S ribosome. This chain is Small ribosomal subunit protein uS11, found in Methylobacillus flagellatus (strain ATCC 51484 / DSM 6875 / VKM B-1610 / KT).